The chain runs to 248 residues: Aspartate/glutamate leucyltransferase (248 aa).

Belongs to the R-transferase family. Bpt subfamily.

It is found in the cytoplasm. The catalysed reaction is N-terminal L-glutamyl-[protein] + L-leucyl-tRNA(Leu) = N-terminal L-leucyl-L-glutamyl-[protein] + tRNA(Leu) + H(+). The enzyme catalyses N-terminal L-aspartyl-[protein] + L-leucyl-tRNA(Leu) = N-terminal L-leucyl-L-aspartyl-[protein] + tRNA(Leu) + H(+). Functionally, functions in the N-end rule pathway of protein degradation where it conjugates Leu from its aminoacyl-tRNA to the N-termini of proteins containing an N-terminal aspartate or glutamate. In Methylorubrum extorquens (strain PA1) (Methylobacterium extorquens), this protein is Aspartate/glutamate leucyltransferase.